We begin with the raw amino-acid sequence, 147 residues long: Hemoglobin subunit epsilon (147 aa).

In terms of domain architecture, Globin spans 3–147 (HFTAEEKAII…VATALAHKYH (145 aa)). Residues Ser-14 and Ser-51 each carry the phosphoserine modification. Residues His-64 and His-93 each coordinate heme b.

The protein belongs to the globin family. In terms of assembly, heterotetramer of two alpha chains and two epsilon chains in early embryonic hemoglobin Gower-2; two zeta chains and two epsilon chains in early embryonic hemoglobin Gower-1. As to expression, red blood cells.

Its function is as follows. The epsilon chain is a beta-type chain of early mammalian embryonic hemoglobin. In Otolemur crassicaudatus (Brown greater galago), this protein is Hemoglobin subunit epsilon (HBE1).